We begin with the raw amino-acid sequence, 414 residues long: MEQPSPVTRQSFDEWIVPTYAPADFIVVRGEGSTLWDQQGKSYIDFAGGIAVNALGHGHPAVRAALIEQADKVWHLGNGYTNEPVLRLAKQLIDATFAEKVFFCNSGAEANEAALKLARKYALDNFANKAGQQGEKNQIVAFRNAFHGRTLFTVSAGGQPKYSQDFAPLPGGIHHGIFNDLASAEHLITDQTCAVIVEPIQGEGGVLPADKEFLHGLRALCDRHNALLIFDEIQTGVGRTGELYAYMHYGVSPDVLTSAKALGGGFPIGAMLTTTKYASALSVGSHGTTFGGNPLACAVAGTVLSLINQPTLLAGVKARHQWFIDELAEINARHNVFAEIRGRGLLIGCVLNAQYAGKSKEIVQAAAQYGLIALIAGPDVVRFAPSLIISPKEIKEGLARLAMGIEQVCQKVTS.

Lys-260 is subject to N6-(pyridoxal phosphate)lysine.

Belongs to the class-III pyridoxal-phosphate-dependent aminotransferase family. AstC subfamily. Pyridoxal 5'-phosphate is required as a cofactor.

It catalyses the reaction N(2)-succinyl-L-ornithine + 2-oxoglutarate = N-succinyl-L-glutamate 5-semialdehyde + L-glutamate. Its pathway is amino-acid degradation; L-arginine degradation via AST pathway; L-glutamate and succinate from L-arginine: step 3/5. Catalyzes the transamination of N(2)-succinylornithine and alpha-ketoglutarate into N(2)-succinylglutamate semialdehyde and glutamate. Can also act as an acetylornithine aminotransferase. The polypeptide is Succinylornithine transaminase (Yersinia pestis bv. Antiqua (strain Antiqua)).